The sequence spans 252 residues: Imidazole glycerol phosphate synthase subunit HisF (252 aa).

Residues Asp-11 and Asp-130 contribute to the active site.

This sequence belongs to the HisA/HisF family. As to quaternary structure, heterodimer of HisH and HisF.

It localises to the cytoplasm. The catalysed reaction is 5-[(5-phospho-1-deoxy-D-ribulos-1-ylimino)methylamino]-1-(5-phospho-beta-D-ribosyl)imidazole-4-carboxamide + L-glutamine = D-erythro-1-(imidazol-4-yl)glycerol 3-phosphate + 5-amino-1-(5-phospho-beta-D-ribosyl)imidazole-4-carboxamide + L-glutamate + H(+). Its pathway is amino-acid biosynthesis; L-histidine biosynthesis; L-histidine from 5-phospho-alpha-D-ribose 1-diphosphate: step 5/9. Functionally, IGPS catalyzes the conversion of PRFAR and glutamine to IGP, AICAR and glutamate. The HisF subunit catalyzes the cyclization activity that produces IGP and AICAR from PRFAR using the ammonia provided by the HisH subunit. This Bacillus cereus (strain ZK / E33L) protein is Imidazole glycerol phosphate synthase subunit HisF.